The chain runs to 148 residues: Myosin light chain 3, skeletal muscle isoform (148 aa).

N-acetylthreonine is present on Thr1. EF-hand domains are found at residues 6 to 41 and 82 to 117; these read DQIEDFKEAFGLFDRIGDSQVAFNQVADIMRALGQN and GTYDDYVEGLRVFDKEGNGTVMGAELRIVLSTLGEK.

In terms of assembly, myosin is a hexamer of 2 heavy chains and 4 light chains.

The sequence is that of Myosin light chain 3, skeletal muscle isoform from Chelon ramada (Thin-lipped grey mullet).